The chain runs to 113 residues: Retrotransposon Gag-like protein 8C (113 aa).

The protein belongs to the FAM127 family.

This is Retrotransposon Gag-like protein 8C from Homo sapiens (Human).